We begin with the raw amino-acid sequence, 151 residues long: Small ribosomal subunit protein uS19 (151 aa).

Belongs to the universal ribosomal protein uS19 family.

Protein S19 forms a complex with S13 that binds strongly to the 16S ribosomal RNA. The protein is Small ribosomal subunit protein uS19 of Picrophilus torridus (strain ATCC 700027 / DSM 9790 / JCM 10055 / NBRC 100828 / KAW 2/3).